Consider the following 465-residue polypeptide: MKIIVSRGLDLSLKGAPKESGFCGKVDPAFVSVDLRPFAPLPLGVKVSPGDQITAGSPLAEYKSFPGVFITSSVDGEVIEIRRGSKRALLDIVIKKKPGVSQTKFSYDLHALSQKELLEVFKKEGLFTLFKQRPFNIPALPTQSPRDVFINLADNRPFTPSVEKHLSLFSSKEDGYYIFVVGVQAIAKLFGLKPHIVSTDRLSLPTQDLISVAHLHTIAGPYPSGSPSTHIHHIARIRNDRDIVFTISFQEVLSIGHLFLKGFFLGQQVVALAGSALPPSQRKYLITAKGASFKDLLPQEIFSSNDVSLISGDPLTGRLCNKEENPCLGMRDHTITILPNPKTREMFSFLRLGWNKLTVTRTYLSGFFKRKRVFMDMNTNLHGEKRPIIDSEIYEKVSAIAVPVAPLIKALETQNFEEACRLGLLEVSPEDFALPTFIDPSKTEMFAIVKEALIRYAKENVLTPL.

It belongs to the NqrA family. Composed of six subunits; NqrA, NqrB, NqrC, NqrD, NqrE and NqrF.

It catalyses the reaction a ubiquinone + n Na(+)(in) + NADH + H(+) = a ubiquinol + n Na(+)(out) + NAD(+). Its function is as follows. NQR complex catalyzes the reduction of ubiquinone-1 to ubiquinol by two successive reactions, coupled with the transport of Na(+) ions from the cytoplasm to the periplasm. NqrA to NqrE are probably involved in the second step, the conversion of ubisemiquinone to ubiquinol. This Chlamydia muridarum (strain MoPn / Nigg) protein is Na(+)-translocating NADH-quinone reductase subunit A.